The following is a 472-amino-acid chain: Guanine nucleotide-binding protein alpha-1 subunit (472 aa).

Gly2 is lipidated: N-myristoyl glycine. Cys3 carries the S-palmitoyl cysteine lipid modification. The region spanning Asn40–Ile472 is the G-alpha domain. The segment at Lys43–Thr56 is G1 motif. The GTP site is built by Glu51, Ser52, Gly53, Lys54, Ser55, and Thr56. Ser55 contacts Mg(2+). Residues Leu127–Asn235 form an insert; not present in other G-proteins region. The tract at residues Gly162–Ser199 is disordered. Lys165 is covalently cross-linked (Glycyl lysine isopeptide (Lys-Gly) (interchain with G-Cter in ubiquitin)). The segment at Asp292 to Thr300 is G2 motif. GTP is bound by residues Leu294, Thr300, Gly322, Asn388, Lys389, Asp391, and Ala444. Thr300 lines the Mg(2+) pocket. Residues Phe315–Arg324 form a G3 motif region. Residues Ile384–Asp391 are G4 motif. Positions Thr442–Thr447 are G5 motif.

The protein belongs to the G-alpha family. G(q) subfamily. G proteins are composed of 3 units; alpha, beta and gamma. The alpha chain contains the guanine nucleotide binding site. In its GDP-bound form, binds to the G protein beta-gamma dimer STE4-STE18. Directly interacts with the beta subunit STE4. Probably forms preactivation complexes with unligated receptors STE2 and STE3. Interacts with FUS3. Pheromone-induced activation of GPA1 increases its association with FUS3. Interacts with SCP160. SCP160 binds specifically to the GTP-bound form of GPA1. Interacts with the phosphatidylinositol 3-kinase (PI3K) subunits VPS15 and VPS34 at the endosome. The GTP-bound form of GPA1 binds directly and selectively to the catalytic subunit VPS34, while the GDP-bound form binds to VPS15, which appears to function as an alternative G protein beta subunit for GPA1. Interacts with regulators of G protein signaling (RGS) proteins MDM1, RAX1, RGS2 and SST2, but SST2 alone binds preferentially to the transition state conformation of GPA1, indicating that it acts as a GAP for this G protein. Mg(2+) serves as cofactor. N-myristoylation by NMT1 is pheromone-stimulated and required for palmitoylation of Cys-3. This lipid modification anchors the protein to membranes. Depalmitoylated by YLR118C/APT1. Post-translationally, monoubiquitination targets the protein for degradation to the vacuole, and polyubiquitination tags the protein for degradation by the proteasome. This may be an additional signaling regulation mechanism.

The protein localises to the cell membrane. The protein resides in the endosome membrane. Alternates between an inactive form bound to GDP and an active form bound to GTP. Activated by the G protein coupled receptors (GPCRs) STE2 and STE3, which serve as guanine nucleotide-exchange factors (GEFs), and inactivated by SST2, probably acting as a GTPase-activating protein (GAP). In terms of biological role, alpha subunit of the heterotrimeric guanine nucleotide-binding protein (G protein) that mediates mating pheromone signal transduction. Binding of alpha-factor or a-factor to its cognate transmembrane receptor STE2 and STE3, respectively, allows the receptor to serve as a guanine nucleotide exchange factor (GEF) on GPA1. The exchange of GDP for GTP on the G protein alpha subunit alters its interaction with the G protein beta subunit STE4, leading to dissociation of the G protein beta-gamma dimer STE4-STE18. The dissociated subunits activate downstream effectors to activate the mating response pathway and induce changes necessary to produce mating-competent cells. STE4-STE18 activate the downstream pheromone signaling MAP kinase cascade leading to expression of mating-specific genes, inducing cell cycle arrest in G1, promoting polarized cell growth to form mating projections (shmoos), and establishing the changes in plasma membrane, cell wall and nuclear envelope to permit cell-cell fusion (plasmogamy) and fusion of the two haploid nuclei (karyogamy). GPA1 transmits a signal that requires direct binding to the effector enzyme PI3K located at the endosome, promoting increased PI3 production. The intrinsic GTPase activity of GPA1 determines the duration of signaling, and is dramatically accelerated by the RGS protein SST2. In unstimulated cells, GDP-bound GPA1 sequesters the G protein beta-gamma subunit STE4-STE18, preventing it from activating the downstream effectors. Also down-regulates the signal by inhibiting the pheromone-induced accumulation of FUS3 in the nucleus. This Saccharomyces cerevisiae (strain ATCC 204508 / S288c) (Baker's yeast) protein is Guanine nucleotide-binding protein alpha-1 subunit (GPA1).